The primary structure comprises 326 residues: Beta-ketoacyl-[acyl-carrier-protein] synthase III (326 aa).

Catalysis depends on residues C111 and H252. The interval 253 to 257 (QANIR) is ACP-binding. Residue N282 is part of the active site.

It belongs to the thiolase-like superfamily. FabH family. In terms of assembly, homodimer.

It localises to the plastid. The protein resides in the chloroplast. The enzyme catalyses malonyl-[ACP] + acetyl-CoA + H(+) = 3-oxobutanoyl-[ACP] + CO2 + CoA. It functions in the pathway lipid metabolism; fatty acid biosynthesis. In terms of biological role, catalyzes the condensation reaction of fatty acid synthesis by the addition to an acyl acceptor of two carbons from malonyl-ACP. Catalyzes the first condensation reaction which initiates fatty acid synthesis and may therefore play a role in governing the total rate of fatty acid production. Possesses both acetoacetyl-ACP synthase and acetyl transacylase activities. Its substrate specificity determines the biosynthesis of branched-chain and/or straight-chain of fatty acids. The protein is Beta-ketoacyl-[acyl-carrier-protein] synthase III of Porphyra purpurea (Red seaweed).